Here is a 785-residue protein sequence, read N- to C-terminus: uncharacterized protein (785 aa).

One can recognise a PE domain in the interval 1–93 (MSWVMVSPEL…GGAYAAAEAA (93 aa)).

The protein belongs to the mycobacterial PE family. PGRS subfamily.

This is an uncharacterized protein from Mycobacterium tuberculosis (strain CDC 1551 / Oshkosh).